The sequence spans 303 residues: Protoheme IX farnesyltransferase (303 aa).

The next 6 helical transmembrane spans lie at 25–45 (MGLVQGNLIPAFAGAWLAIVM), 54–74 (IPQILLMLVGSTLIMGGACAL), 118–138 (CLFLLNIPSGVLGLIGIVGYV), 166–186 (IGWVAIDGSLSLAAVALFLVV), 230–250 (LVLLLPLPFLLSNLGVTFVVI), and 280–300 (FVYSLNYLVVFFALVVVVSLI).

This sequence belongs to the UbiA prenyltransferase family. Protoheme IX farnesyltransferase subfamily. In terms of assembly, interacts with CtaA.

The protein resides in the cell membrane. The catalysed reaction is heme b + (2E,6E)-farnesyl diphosphate + H2O = Fe(II)-heme o + diphosphate. It functions in the pathway porphyrin-containing compound metabolism; heme O biosynthesis; heme O from protoheme: step 1/1. Functionally, converts heme B (protoheme IX) to heme O by substitution of the vinyl group on carbon 2 of heme B porphyrin ring with a hydroxyethyl farnesyl side group. The protein is Protoheme IX farnesyltransferase of Staphylococcus epidermidis (strain ATCC 12228 / FDA PCI 1200).